The following is a 960-amino-acid chain: FYVE, RhoGEF and PH domain-containing protein 1 (960 aa).

Disordered stretches follow at residues 1–210 (MHGH…SSAA) and 226–355 (ASDR…REIP). Ser-48 carries the post-translational modification Phosphoserine. Residues 125-135 (PHPEGPQRLRS) show a composition bias toward basic and acidic residues. 3 stretches are compositionally biased toward pro residues: residues 137–149 (PGPP…PRPS), 156–165 (GPKPQVPPKP), and 173–190 (VLPP…PLPA). The short motif at 171-187 (PRVLPPPEPIPPPPSRP) is the SH3-binding element. Ser-205 carries the post-translational modification Phosphoserine. The span at 231–251 (APGPCPVPPEPAMLPQPPPQP) shows a compositional bias: pro residues. A compositionally biased stretch (basic and acidic residues) spans 273–284 (RDGEKVPNRDSG). Residues 285–294 (IDSISSPSNS) show a composition bias toward low complexity. The segment covering 335 to 350 (VDSDLEEEEEEEEEEK) has biased composition (acidic residues). The DH domain maps to 372–560 (KVFHIANELL…ATAAEHSNAA (189 aa)). In terms of domain architecture, PH 1 spans 589–688 (ELIKEGHILK…WVQAINSTLL (100 aa)). Residues 701 to 725 (NSTNRDDEDTPPNSPNVDLGKRAPT) form a disordered region. Phosphothreonine is present on Thr-710. Residue Ser-714 is modified to Phosphoserine. Residues 729-789 (EKEVTMCMRC…VCTDCYVALH (61 aa)) form an FYVE-type zinc finger. Residues Cys-735, Cys-738, Cys-752, Cys-755, Cys-760, Cys-763, Cys-781, and Cys-784 each contribute to the Zn(2+) site. A PH 2 domain is found at 820 to 920 (NSVICSFLHY…WMAVLGRAGR (101 aa)). The tract at residues 922 to 960 (DTFCPGPTLSEDKEMEETPVAASGATAEPPEASQTRDKT) is disordered.

In terms of assembly, interacts with DBNL/ABP1 and CTTN. Binds CDC42. May interact with CCPG1.

The protein localises to the cytoplasm. The protein resides in the cell projection. It is found in the lamellipodium. Its subcellular location is the ruffle. It localises to the cytoskeleton. Functionally, activates CDC42, a member of the Ras-like family of Rho- and Rac proteins, by exchanging bound GDP for free GTP. Plays a role in regulating the actin cytoskeleton and cell shape. The chain is FYVE, RhoGEF and PH domain-containing protein 1 (Fgd1) from Mus musculus (Mouse).